A 370-amino-acid chain; its full sequence is Phosphate-binding protein PstS2 (370 aa).

A signal peptide spans M1 to A22. C23 carries N-palmitoyl cysteine lipidation. A lipid anchor (S-diacylglycerol cysteine) is attached at C23. Residues S54–A56, S84, D102, and S191–T193 each bind phosphate.

It belongs to the PstS family. The complex is composed of two ATP-binding proteins (PstB), two transmembrane proteins (PstC and PstA) and a solute-binding protein (PstS).

It localises to the cell membrane. The protein resides in the secreted. Its function is as follows. Functions in inorganic phosphate uptake, a phosphate-binding protein, although probably not the main uptake protein under phosphate starvation. Part of the ABC transporter complex PstSACB involved in phosphate import. The polypeptide is Phosphate-binding protein PstS2 (pstS2) (Mycobacterium bovis (strain BCG / Pasteur 1173P2)).